Reading from the N-terminus, the 363-residue chain is Cytoplasmic envelopment protein 2 (363 aa).

It belongs to the herpesviridae cytoplasmic envelopment protein 2 family. In terms of assembly, interacts with cytoplasmic envelopment protein 3 and with the capsid.

The protein localises to the virion tegument. Its subcellular location is the host cytoplasm. It is found in the host nucleus. Its function is as follows. Plays a critical role in cytoplasmic virus egress. Participates in the final step of tegumentation and envelope acquisition within the host cytoplasm by directly interacting with the capsid. Upon virion binding to target cell, a signaling cascade is triggered to disrupt the interaction with the capsid, thereby preparing capsid uncoating. The polypeptide is Cytoplasmic envelopment protein 2 (44) (Varicella-zoster virus (strain Dumas) (HHV-3)).